A 420-amino-acid chain; its full sequence is UDP-N-acetylglucosamine 1-carboxyvinyltransferase (420 aa).

Residue 22 to 23 (KN) coordinates phosphoenolpyruvate. Arginine 91 is a binding site for UDP-N-acetyl-alpha-D-glucosamine. Cysteine 115 acts as the Proton donor in catalysis. Cysteine 115 bears the 2-(S-cysteinyl)pyruvic acid O-phosphothioketal mark. UDP-N-acetyl-alpha-D-glucosamine-binding positions include 120-124 (RPVDL), 160-163 (KVSV), aspartate 305, and isoleucine 327.

This sequence belongs to the EPSP synthase family. MurA subfamily.

The protein resides in the cytoplasm. The enzyme catalyses phosphoenolpyruvate + UDP-N-acetyl-alpha-D-glucosamine = UDP-N-acetyl-3-O-(1-carboxyvinyl)-alpha-D-glucosamine + phosphate. Its pathway is cell wall biogenesis; peptidoglycan biosynthesis. In terms of biological role, cell wall formation. Adds enolpyruvyl to UDP-N-acetylglucosamine. This Pectobacterium atrosepticum (strain SCRI 1043 / ATCC BAA-672) (Erwinia carotovora subsp. atroseptica) protein is UDP-N-acetylglucosamine 1-carboxyvinyltransferase.